The sequence spans 393 residues: Riboflavin biosynthesis protein RibBA (393 aa).

A DHBP synthase region spans residues methionine 1–lysine 200. D-ribulose 5-phosphate contacts are provided by residues arginine 27–glutamate 28, aspartate 32, arginine 139–threonine 143, and glutamate 163. Residue glutamate 28 participates in Mg(2+) binding. Histidine 142 is a binding site for Mg(2+). The tract at residues leucine 201 to isoleucine 393 is GTP cyclohydrolase II. A GTP-binding site is contributed by arginine 249 to alanine 253. Residues cysteine 254, cysteine 265, and cysteine 267 each contribute to the Zn(2+) site. Residues glutamine 270, glutamate 291–arginine 293, and threonine 313 contribute to the GTP site. Aspartate 325 functions as the Proton acceptor; for GTP cyclohydrolase activity in the catalytic mechanism. The active-site Nucleophile; for GTP cyclohydrolase activity is arginine 327. Residues serine 348 and lysine 353 each coordinate GTP.

It in the N-terminal section; belongs to the DHBP synthase family. The protein in the C-terminal section; belongs to the GTP cyclohydrolase II family. It depends on Mg(2+) as a cofactor. Mn(2+) is required as a cofactor. Requires Zn(2+) as cofactor.

It carries out the reaction D-ribulose 5-phosphate = (2S)-2-hydroxy-3-oxobutyl phosphate + formate + H(+). The enzyme catalyses GTP + 4 H2O = 2,5-diamino-6-hydroxy-4-(5-phosphoribosylamino)-pyrimidine + formate + 2 phosphate + 3 H(+). Its pathway is cofactor biosynthesis; riboflavin biosynthesis; 2-hydroxy-3-oxobutyl phosphate from D-ribulose 5-phosphate: step 1/1. It functions in the pathway cofactor biosynthesis; riboflavin biosynthesis; 5-amino-6-(D-ribitylamino)uracil from GTP: step 1/4. Catalyzes the conversion of D-ribulose 5-phosphate to formate and 3,4-dihydroxy-2-butanone 4-phosphate. Its function is as follows. Catalyzes the conversion of GTP to 2,5-diamino-6-ribosylamino-4(3H)-pyrimidinone 5'-phosphate (DARP), formate and pyrophosphate. The sequence is that of Riboflavin biosynthesis protein RibBA from Staphylococcus aureus (strain MRSA252).